The chain runs to 147 residues: Putative fibroblast growth factor 1 (147 aa).

Asn25 is a binding site for heparin. The segment at 117 to 133 (KKNGKMKRGPRTHIGQK) is heparin-binding.

The protein belongs to the heparin-binding growth factors family.

The protein resides in the secreted. Its subcellular location is the cytoplasm. It is found in the cell cortex. It localises to the cytosol. The protein localises to the nucleus. In terms of biological role, plays an important role in the regulation of cell survival, cell division, angiogenesis, cell differentiation and cell migration. Functions as a potent mitogen in vitro. Acts as a ligand for FGFR1 and integrins. Binds to FGFR1 in the presence of heparin leading to FGFR1 dimerization and activation via sequential autophosphorylation on tyrosine residues which act as docking sites for interacting proteins, leading to the activation of several signaling cascades. Binds to integrins. Its binding to integrins and subsequent ternary complex formation with integrins and FGFR1 are essential for FGF1 signaling. The sequence is that of Putative fibroblast growth factor 1 (fgf1) from Danio rerio (Zebrafish).